A 490-amino-acid polypeptide reads, in one-letter code: Probable malate:quinone oxidoreductase (490 aa).

It belongs to the MQO family. FAD serves as cofactor.

It catalyses the reaction (S)-malate + a quinone = a quinol + oxaloacetate. It functions in the pathway carbohydrate metabolism; tricarboxylic acid cycle; oxaloacetate from (S)-malate (quinone route): step 1/1. The sequence is that of Probable malate:quinone oxidoreductase from Corynebacterium jeikeium (strain K411).